The primary structure comprises 391 residues: Putative gustatory receptor 36b (391 aa).

Residues 1–4 (MVDW) are Cytoplasmic-facing. The chain crosses the membrane as a helical span at residues 5–25 (VVLLLKAVHIYCYLIGLSNFE). Topologically, residues 26 to 39 (FDCRTGRVFKSRRC) are extracellular. Residues 40 to 60 (TIYAFMANIFILITIIYNFTA) form a helical membrane-spanning segment. At 61–74 (HGDTNLLFQSANKL) the chain is on the cytoplasmic side. The helical transmembrane segment at 75–95 (HEYVIIIMSGLKIVAGLITVL) threads the bilayer. Residues 96–127 (NRWLQRGQMMQLVKDVIRLYMINPQLKSMIRW) lie on the Extracellular side of the membrane. A helical transmembrane segment spans residues 128–148 (GILLKAFISFAIELLQVTLSV). The Cytoplasmic portion of the chain corresponds to 149-165 (DALDRQGTAEMMGLLVK). Residues 166 to 186 (LCVSFIMNLAISQHFLVILLI) form a helical membrane-spanning segment. Topologically, residues 187–284 (RAQYRIMNAK…YKYGPHNLKL (98 aa)) are extracellular. Residues 285 to 305 (SAKTSIIVCILITLFYLDALV) traverse the membrane as a helical segment. Residues 306–363 (NCNNMLRVLDHHKDFLGLLEERTVFASSLDIRLEESFESLQLQLARNPLKINVMGMFP) are Cytoplasmic-facing. Residues 364–384 (ITRGSTAAMCASVIVNSIFLI) form a helical membrane-spanning segment. At 385-391 (QFDMEFF) the chain is on the extracellular side.

It belongs to the insect chemoreceptor superfamily. Gustatory receptor (GR) family. Gr22e subfamily. As to expression, expressed in neurons of the terminal external chemosensory organ of larvae.

The protein localises to the cell membrane. Its function is as follows. Probable gustatory receptor which mediates acceptance or avoidance behavior, depending on its substrates. In Drosophila melanogaster (Fruit fly), this protein is Putative gustatory receptor 36b (Gr36b).